The primary structure comprises 91 residues: Small ribosomal subunit protein uS19 (91 aa).

The protein belongs to the universal ribosomal protein uS19 family.

In terms of biological role, protein S19 forms a complex with S13 that binds strongly to the 16S ribosomal RNA. The sequence is that of Small ribosomal subunit protein uS19 from Pseudomonas fluorescens (strain SBW25).